A 370-amino-acid polypeptide reads, in one-letter code: Small ribosomal subunit biogenesis GTPase RsgA (370 aa).

In terms of domain architecture, CP-type G spans 111-270 (RSEGQILAAN…LIDTPGLRGV (160 aa)). Residues 158–161 (TKAD) and 212–220 (GQSGAGKST) contribute to the GTP site. 4 residues coordinate Zn(2+): Cys-293, Cys-298, His-300, and Cys-306.

It belongs to the TRAFAC class YlqF/YawG GTPase family. RsgA subfamily. Monomer. Associates with 30S ribosomal subunit, binds 16S rRNA. Requires Zn(2+) as cofactor.

Its subcellular location is the cytoplasm. One of several proteins that assist in the late maturation steps of the functional core of the 30S ribosomal subunit. Helps release RbfA from mature subunits. May play a role in the assembly of ribosomal proteins into the subunit. Circularly permuted GTPase that catalyzes slow GTP hydrolysis, GTPase activity is stimulated by the 30S ribosomal subunit. This chain is Small ribosomal subunit biogenesis GTPase RsgA, found in Streptomyces avermitilis (strain ATCC 31267 / DSM 46492 / JCM 5070 / NBRC 14893 / NCIMB 12804 / NRRL 8165 / MA-4680).